A 359-amino-acid polypeptide reads, in one-letter code: Serine/threonine-protein kinase SAPK7 (359 aa).

A Protein kinase domain is found at 4-260; it reads YELLKDIGAG…IREIRNHPWF (257 aa). Residues 10 to 18 and Lys33 each bind ATP; that span reads IGAGNFGVA. Asp123 acts as the Proton acceptor in catalysis. A disordered region spans residues 299–359; that stretch reads EEARTPPRSS…VHASGEFQLS (61 aa). Residues 331-343 show a composition bias toward acidic residues; the sequence is EEQEEEEDAEDEY.

It belongs to the protein kinase superfamily. Ser/Thr protein kinase family. May be phosphorylated. In terms of tissue distribution, weakly expressed in roots. Expressed in roots of young seedlings.

It is found in the cytoplasm. Its subcellular location is the nucleus. The enzyme catalyses L-seryl-[protein] + ATP = O-phospho-L-seryl-[protein] + ADP + H(+). It catalyses the reaction L-threonyl-[protein] + ATP = O-phospho-L-threonyl-[protein] + ADP + H(+). Activated by hyperosmotic stress. In terms of biological role, may play a role in signal transduction of hyperosmotic response. The polypeptide is Serine/threonine-protein kinase SAPK7 (SAPK7) (Oryza sativa subsp. japonica (Rice)).